Reading from the N-terminus, the 426-residue chain is Probable inactive metalloprotease YmfF (426 aa).

H50 and E138 together coordinate Zn(2+).

Belongs to the peptidase M16 family.

The chain is Probable inactive metalloprotease YmfF (ymfF) from Bacillus subtilis (strain 168).